The following is a 167-amino-acid chain: Homing endonuclease I-ApeII (167 aa).

It belongs to the LAGLIDADG endonuclease family.

Its function is as follows. Endonuclease involved in rRNA intron I-gamma homing. The sequence is that of Homing endonuclease I-ApeII (apeII) from Aeropyrum pernix (strain ATCC 700893 / DSM 11879 / JCM 9820 / NBRC 100138 / K1).